Here is a 151-residue protein sequence, read N- to C-terminus: Lipoprotein signal peptidase (151 aa).

A run of 2 helical transmembrane segments spans residues 61-81 (GSQW…IWIG) and 88-107 (SRWQ…GNGI). Residues Asp117 and Asp133 contribute to the active site. A helical membrane pass occupies residues 128–148 (VFNLADVAINLAVLCLLIEAI).

This sequence belongs to the peptidase A8 family.

The protein resides in the cell inner membrane. It carries out the reaction Release of signal peptides from bacterial membrane prolipoproteins. Hydrolyzes -Xaa-Yaa-Zaa-|-(S,diacylglyceryl)Cys-, in which Xaa is hydrophobic (preferably Leu), and Yaa (Ala or Ser) and Zaa (Gly or Ala) have small, neutral side chains.. The protein operates within protein modification; lipoprotein biosynthesis (signal peptide cleavage). This protein specifically catalyzes the removal of signal peptides from prolipoproteins. The chain is Lipoprotein signal peptidase from Synechococcus sp. (strain RCC307).